An 857-amino-acid polypeptide reads, in one-letter code: DNA mismatch repair protein MutS (857 aa).

Position 608-615 (608-615 (GPNMSGKS)) interacts with ATP.

It belongs to the DNA mismatch repair MutS family.

In terms of biological role, this protein is involved in the repair of mismatches in DNA. It is possible that it carries out the mismatch recognition step. This protein has a weak ATPase activity. The chain is DNA mismatch repair protein MutS from Lactobacillus gasseri (strain ATCC 33323 / DSM 20243 / BCRC 14619 / CIP 102991 / JCM 1131 / KCTC 3163 / NCIMB 11718 / NCTC 13722 / AM63).